We begin with the raw amino-acid sequence, 440 residues long: UDP-N-acetylmuramoylalanine--D-glutamate ligase (440 aa).

Glycine 128–threonine 134 provides a ligand contact to ATP.

It belongs to the MurCDEF family.

It localises to the cytoplasm. The enzyme catalyses UDP-N-acetyl-alpha-D-muramoyl-L-alanine + D-glutamate + ATP = UDP-N-acetyl-alpha-D-muramoyl-L-alanyl-D-glutamate + ADP + phosphate + H(+). Its pathway is cell wall biogenesis; peptidoglycan biosynthesis. Functionally, cell wall formation. Catalyzes the addition of glutamate to the nucleotide precursor UDP-N-acetylmuramoyl-L-alanine (UMA). The protein is UDP-N-acetylmuramoylalanine--D-glutamate ligase of Lawsonia intracellularis (strain PHE/MN1-00).